The sequence spans 151 residues: 3-hydroxyacyl-[acyl-carrier-protein] dehydratase FabZ (151 aa).

H49 is a catalytic residue.

Belongs to the thioester dehydratase family. FabZ subfamily.

The protein localises to the cytoplasm. The enzyme catalyses a (3R)-hydroxyacyl-[ACP] = a (2E)-enoyl-[ACP] + H2O. Involved in unsaturated fatty acids biosynthesis. Catalyzes the dehydration of short chain beta-hydroxyacyl-ACPs and long chain saturated and unsaturated beta-hydroxyacyl-ACPs. The polypeptide is 3-hydroxyacyl-[acyl-carrier-protein] dehydratase FabZ (Wolinella succinogenes (strain ATCC 29543 / DSM 1740 / CCUG 13145 / JCM 31913 / LMG 7466 / NCTC 11488 / FDC 602W) (Vibrio succinogenes)).